The following is a 230-amino-acid chain: Large ribosomal subunit protein uL1 (230 aa).

It belongs to the universal ribosomal protein uL1 family. As to quaternary structure, part of the 50S ribosomal subunit.

Binds directly to 23S rRNA. The L1 stalk is quite mobile in the ribosome, and is involved in E site tRNA release. Its function is as follows. Protein L1 is also a translational repressor protein, it controls the translation of the L11 operon by binding to its mRNA. The polypeptide is Large ribosomal subunit protein uL1 (Bifidobacterium longum (strain DJO10A)).